Reading from the N-terminus, the 406-residue chain is 3-oxoacyl-[acyl-carrier-protein] synthase 1 (406 aa).

The 403-residue stretch at Met-1–Lys-403 folds into the Ketosynthase family 3 (KS3) domain. Active-site for beta-ketoacyl synthase activity residues include Cys-163, His-298, and His-333.

This sequence belongs to the thiolase-like superfamily. Beta-ketoacyl-ACP synthases family. Homodimer.

The protein localises to the cytoplasm. It carries out the reaction a fatty acyl-[ACP] + malonyl-[ACP] + H(+) = a 3-oxoacyl-[ACP] + holo-[ACP] + CO2. It catalyses the reaction (3Z)-decenoyl-[ACP] + malonyl-[ACP] + H(+) = 3-oxo-(5Z)-dodecenoyl-[ACP] + holo-[ACP] + CO2. It functions in the pathway lipid metabolism; fatty acid biosynthesis. Functionally, involved in the type II fatty acid elongation cycle. Catalyzes the elongation of a wide range of acyl-ACP by the addition of two carbons from malonyl-ACP to an acyl acceptor. Can also use unsaturated fatty acids. Catalyzes a key reaction in unsaturated fatty acid (UFA) synthesis, the elongation of the cis-3-decenoyl-ACP produced by FabA. The polypeptide is 3-oxoacyl-[acyl-carrier-protein] synthase 1 (fabB) (Escherichia coli O6:H1 (strain CFT073 / ATCC 700928 / UPEC)).